Consider the following 391-residue polypeptide: NAD(P)H-quinone oxidoreductase subunit H, chloroplastic (391 aa).

It belongs to the complex I 49 kDa subunit family. NDH is composed of at least 16 different subunits, 5 of which are encoded in the nucleus.

It is found in the plastid. The protein localises to the chloroplast thylakoid membrane. It carries out the reaction a plastoquinone + NADH + (n+1) H(+)(in) = a plastoquinol + NAD(+) + n H(+)(out). The enzyme catalyses a plastoquinone + NADPH + (n+1) H(+)(in) = a plastoquinol + NADP(+) + n H(+)(out). NDH shuttles electrons from NAD(P)H:plastoquinone, via FMN and iron-sulfur (Fe-S) centers, to quinones in the photosynthetic chain and possibly in a chloroplast respiratory chain. The immediate electron acceptor for the enzyme in this species is believed to be plastoquinone. Couples the redox reaction to proton translocation, and thus conserves the redox energy in a proton gradient. This Chaetosphaeridium globosum (Charophycean green alga) protein is NAD(P)H-quinone oxidoreductase subunit H, chloroplastic.